Reading from the N-terminus, the 497-residue chain is Probable cytosol aminopeptidase (497 aa).

2 residues coordinate Mn(2+): K268 and D273. K280 is a catalytic residue. Mn(2+)-binding residues include D291, D350, and E352. Residue R354 is part of the active site.

Belongs to the peptidase M17 family. It depends on Mn(2+) as a cofactor.

The protein localises to the cytoplasm. The catalysed reaction is Release of an N-terminal amino acid, Xaa-|-Yaa-, in which Xaa is preferably Leu, but may be other amino acids including Pro although not Arg or Lys, and Yaa may be Pro. Amino acid amides and methyl esters are also readily hydrolyzed, but rates on arylamides are exceedingly low.. It carries out the reaction Release of an N-terminal amino acid, preferentially leucine, but not glutamic or aspartic acids.. Its function is as follows. Presumably involved in the processing and regular turnover of intracellular proteins. Catalyzes the removal of unsubstituted N-terminal amino acids from various peptides. This is Probable cytosol aminopeptidase from Alkalilimnicola ehrlichii (strain ATCC BAA-1101 / DSM 17681 / MLHE-1).